We begin with the raw amino-acid sequence, 242 residues long: MRLIVTKNYEEMSKVAAKEMAEDIKRNPEIVLGLATGGTPVGMYKELIRMYNEGELDFSKVTSINLDEYVGLSGDHDQSYRYFMNTNLFNHINIDKNNTFVPNGLAENVEEECMAYDSRIQDMGGIDLQLLGLGANGHIGFNEPGEALSVGTHLTDLKESTIEANARFFDSIDDVPRKAITMGLGGIMKAKKIMVIASGEGKAEVVKAMMSGKITTEIPATMLQMHRDVILIVDEDAAKLLK.

D67 acts as the Proton acceptor; for enolization step in catalysis. N136 serves as the catalytic For ring-opening step. The active-site Proton acceptor; for ring-opening step is H138. The active-site For ring-opening step is E143.

This sequence belongs to the glucosamine/galactosamine-6-phosphate isomerase family. NagB subfamily.

It catalyses the reaction alpha-D-glucosamine 6-phosphate + H2O = beta-D-fructose 6-phosphate + NH4(+). The protein operates within amino-sugar metabolism; N-acetylneuraminate degradation; D-fructose 6-phosphate from N-acetylneuraminate: step 5/5. Its function is as follows. Catalyzes the reversible isomerization-deamination of glucosamine 6-phosphate (GlcN6P) to form fructose 6-phosphate (Fru6P) and ammonium ion. The polypeptide is Glucosamine-6-phosphate deaminase (Clostridium perfringens (strain 13 / Type A)).